Here is a 316-residue protein sequence, read N- to C-terminus: tRNA dimethylallyltransferase (316 aa).

17 to 24 (GPTASGKT) contacts ATP. Position 19 to 24 (19 to 24 (TASGKT)) interacts with substrate. 4 interaction with substrate tRNA regions span residues 42 to 45 (DSAL), 166 to 170 (QRLSR), 247 to 252 (RCVGYR), and 280 to 287 (KRQITWLR).

This sequence belongs to the IPP transferase family. Monomer. Requires Mg(2+) as cofactor.

The enzyme catalyses adenosine(37) in tRNA + dimethylallyl diphosphate = N(6)-dimethylallyladenosine(37) in tRNA + diphosphate. Its function is as follows. Catalyzes the transfer of a dimethylallyl group onto the adenine at position 37 in tRNAs that read codons beginning with uridine, leading to the formation of N6-(dimethylallyl)adenosine (i(6)A). In Escherichia coli O6:K15:H31 (strain 536 / UPEC), this protein is tRNA dimethylallyltransferase.